A 309-amino-acid chain; its full sequence is tRNA dimethylallyltransferase (309 aa).

13–20 (GPTGAGKT) serves as a coordination point for ATP. 15-20 (TGAGKT) lines the substrate pocket. Interaction with substrate tRNA stretches follow at residues 38-41 (DSRQ) and 162-166 (QRVTR).

This sequence belongs to the IPP transferase family. As to quaternary structure, monomer. The cofactor is Mg(2+).

The catalysed reaction is adenosine(37) in tRNA + dimethylallyl diphosphate = N(6)-dimethylallyladenosine(37) in tRNA + diphosphate. Functionally, catalyzes the transfer of a dimethylallyl group onto the adenine at position 37 in tRNAs that read codons beginning with uridine, leading to the formation of N6-(dimethylallyl)adenosine (i(6)A). The sequence is that of tRNA dimethylallyltransferase from Nitratidesulfovibrio vulgaris (strain ATCC 29579 / DSM 644 / CCUG 34227 / NCIMB 8303 / VKM B-1760 / Hildenborough) (Desulfovibrio vulgaris).